We begin with the raw amino-acid sequence, 299 residues long: Apolipoprotein E (299 aa).

An N-terminal signal peptide occupies residues 1–18 (MKVLWAVLVVTLLAGCRA). Tandem repeats lie at residues 74-95 (LLMEDTMKEVKAYKAELEQELA), 96-117 (PMAEDTRARLSKELQAAQARLG), 118-139 (ADMEEVRNRLAQYRGEVQAMLG), 140-161 (QSAEELRARLASHLRKMRKRLL), 162-183 (RDAEDLQKRLAVYKAGAREGAE), 184-205 (RGVSAIRERLASLVEQGRLRSA), and 224-245 (GRLEEVGGQARDRLDVVREQME). Residues 74–245 (LLMEDTMKEV…RLDVVREQME (172 aa)) are 8 X 22 AA approximate tandem repeats. Position 137 is a methionine sulfoxide (methionine 137). The residue at position 141 (serine 141) is a Phosphoserine. Residues 152–162 (HLRKMRKRLLR) are LDL and other lipoprotein receptors binding. Residue 156–159 (MRKR) coordinates heparin. The interval 204–273 (SALTSQPLRE…GWFEPMVEDM (70 aa)) is lipid-binding and lipoprotein association. 219–226 (GERLRGRL) is a heparin binding site. The specificity for association with VLDL stretch occupies residues 261–273 (RLKGWFEPMVEDM).

Belongs to the apolipoprotein A1/A4/E family. As to quaternary structure, homotetramer. May interact with ABCA1; functionally associated with ABCA1 in the biogenesis of HDLs. May interact with APP/A4 amyloid-beta peptide; the interaction is extremely stable in vitro but its physiological significance is unclear. May interact with MAPT. May interact with MAP2. In the cerebrospinal fluid, interacts with secreted SORL1. Interacts with PMEL; this allows the loading of PMEL luminal fragment on ILVs to induce fibril nucleation. APOE exists as multiple glycosylated and sialylated glycoforms within cells and in plasma. The extent of glycosylation and sialylation are tissue and context specific. Post-translationally, glycated in plasma VLDL. In terms of processing, phosphorylated by FAM20C in the extracellular medium.

It is found in the secreted. The protein resides in the extracellular space. It localises to the extracellular matrix. The protein localises to the extracellular vesicle. Its subcellular location is the endosome. It is found in the multivesicular body. APOE is an apolipoprotein, a protein associating with lipid particles, that mainly functions in lipoprotein-mediated lipid transport between organs via the plasma and interstitial fluids. APOE is a core component of plasma lipoproteins and is involved in their production, conversion and clearance. Apolipoproteins are amphipathic molecules that interact both with lipids of the lipoprotein particle core and the aqueous environment of the plasma. As such, APOE associates with chylomicrons, chylomicron remnants, very low density lipoproteins (VLDL) and intermediate density lipoproteins (IDL) but shows a preferential binding to high-density lipoproteins (HDL). It also binds a wide range of cellular receptors including the LDL receptor/LDLR, the LDL receptor-related proteins LRP1, LRP2 and LRP8 and the very low-density lipoprotein receptor/VLDLR that mediate the cellular uptake of the APOE-containing lipoprotein particles. Finally, APOE also has a heparin-binding activity and binds heparan-sulfate proteoglycans on the surface of cells, a property that supports the capture and the receptor-mediated uptake of APOE-containing lipoproteins by cells. A main function of APOE is to mediate lipoprotein clearance through the uptake of chylomicrons, VLDLs, and HDLs by hepatocytes. APOE is also involved in the biosynthesis by the liver of VLDLs as well as their uptake by peripheral tissues ensuring the delivery of triglycerides and energy storage in muscle, heart and adipose tissues. By participating in the lipoprotein-mediated distribution of lipids among tissues, APOE plays a critical role in plasma and tissues lipid homeostasis. APOE is also involved in two steps of reverse cholesterol transport, the HDLs-mediated transport of cholesterol from peripheral tissues to the liver, and thereby plays an important role in cholesterol homeostasis. First, it is functionally associated with ABCA1 in the biogenesis of HDLs in tissues. Second, it is enriched in circulating HDLs and mediates their uptake by hepatocytes. APOE also plays an important role in lipid transport in the central nervous system, regulating neuron survival and sprouting. This is Apolipoprotein E (APOE) from Erethizon dorsatum (North American porcupine).